The sequence spans 776 residues: Hepatocyte growth factor-regulated tyrosine kinase substrate (776 aa).

The region spanning 15-143 (ATSQLLLETD…IMKVEGHVFP (129 aa)) is the VHS domain. The FYVE-type zinc-finger motif lies at 160–220 (WVDAEECHRC…VCEPCYEQLN (61 aa)). The Zn(2+) site is built by C166, C169, C182, C185, C190, and C193. N6-acetyllysine is present on K207. Residues C212 and C215 each contribute to the Zn(2+) site. Y216 bears the Phosphotyrosine mark. The interval 223 to 319 (AEGKAASTTE…SPVNSSAPLA (97 aa)) is disordered. Residues 225–542 (GKAASTTELP…QRLQEQEKER (318 aa)) are interaction with SNX1. The UIM domain maps to 258–277 (QEEEELQLALALSQSEAEEK). Residues 294–311 (PAPLASSAPPAGSLYSSP) are compositionally biased toward low complexity. Residues Y308, Y329, and Y334 each carry the phosphotyrosine modification. Residues 338–401 (KQEEARKSPT…SEQYQNGESE (64 aa)) form a disordered region. Polar residues predominate over residues 379-398 (TDSQPITSCSGPFSEQYQNG). The interaction with SNAP25 and TRAK2 stretch occupies residues 444-542 (SINSTHPQLL…QRLQEQEKER (99 aa)). Positions 453-571 (LELLNRLDER…FPLPYAQLQA (119 aa)) are interaction with STAM. Positions 479 to 776 (ARGALSALRE…GNETQLISFD (298 aa)) are interaction with NF2. N6-succinyllysine is present on K550. A disordered region spans residues 719-776 (GQDASLPAQQPYITGQQPMYQQMAPSTGPPQQQPPVAQPPPTQGPPAQGNETQLISFD). Positions 725 to 743 (PAQQPYITGQQPMYQQMAP) are enriched in polar residues. Positions 745–762 (TGPPQQQPPVAQPPPTQG) are enriched in pro residues. Residues 767 to 776 (GNETQLISFD) are compositionally biased toward polar residues.

As to quaternary structure, component of the ESCRT-0 complex composed of STAM or STAM2 and HGS. Part of a complex at least composed of HSG, STAM2 (or probably STAM) and EPS15. Interacts with STAM. Interacts with STAM2. Interacts with EPS15; the interaction is direct, calcium-dependent and inhibited by SNAP25. Identified in a complex with STAM and LITAF. Found in a complex with STAM and E3 ligase ITCH and DTX3L. Interacts with E3 ligase DTX3L; the interaction brings together STAM and HSG, promotes their recruitment to early endosomes and decreases STAM and HGS ubiquitination by ITCH. Interacts with NF2; the interaction is direct. Interacts with ubiquitin; the interaction is direct. Interacts with VPS37C. Interacts with SMAD1, SMAD2 and SMAD3. Interacts with TSG101; the interaction mediates the association with the ESCRT-I complex. Interacts with SNAP25; the interaction is direct and decreases with addition of increasing concentrations of free calcium. Interacts with SNX1; the interaction is direct. Component of a 550 kDa membrane complex at least composed of HGS and SNX1 but excluding EGFR. Interacts with TRAK2. Interacts with TRAK1. Component of the CART complex, at least composed of ACTN4, HGS/HRS, MYO5B and TRIM3. Interacts (via UIM domain) with UBQLN1 (via ubiquitin-like domain). Interacts with ARRDC3. Identified in a complex containing at least ARRDC4, AVPR2 and HGS. Interacts with LAPTM4B; promotes HGS ubiquitination. Phosphorylated on Tyr-334. This phosphorylation occurs in response to EGF. A minor site of phosphorylation on Tyr-329 is detected. Protein phosphorylation may also be triggered in response to IL-2, GM-CSF and HGF. Post-translationally, ubiquitinated by ITCH. In terms of tissue distribution, ubiquitously expressed.

The protein resides in the cytoplasm. It is found in the early endosome membrane. Its subcellular location is the endosome. The protein localises to the multivesicular body membrane. Functionally, involved in intracellular signal transduction mediated by cytokines and growth factors. When associated with STAM, it suppresses DNA signaling upon stimulation by IL-2 and GM-CSF. Could be a direct effector of PI3-kinase in vesicular pathway via early endosomes and may regulate trafficking to early and late endosomes by recruiting clathrin. May concentrate ubiquitinated receptors within clathrin-coated regions. Involved in down-regulation of receptor tyrosine kinase via multivesicular body (MVBs) when complexed with STAM (ESCRT-0 complex). The ESCRT-0 complex binds ubiquitin and acts as a sorting machinery that recognizes ubiquitinated receptors and transfers them to further sequential lysosomal sorting/trafficking processes. Involved in receptor recycling via its association with the CART complex, a multiprotein complex required for efficient transferrin receptor recycling but not for EGFR degradation. May contribute to the efficient recruitment of SMADs to the activin receptor complex. The sequence is that of Hepatocyte growth factor-regulated tyrosine kinase substrate (Hgs) from Rattus norvegicus (Rat).